The sequence spans 276 residues: MSGGAAHSALTEEDVMKLLATQAHLGSTNLNFQMQQYVYKRRFDGPNIINVKKTWEKLLLAARAIAAVENPADVVVVSARPYAQRALLKFAAHTGATAIFGRFSPGCLTNQIQKTFKEPRLLVISDPRIDHQAVTEASYVGVPVISFVNTESPLKLIDIGVPCNNKGERSIGLMWWMLAREILILRGKISRQTGFVLEGKEIMPDLYFYRDPTETEKEETGAHADVAEAQEYQQPTDIDFTTQGGKVDDWAAETATWTAETKTTEEWANAPTQSNW.

N-acetylserine is present on S2.

This sequence belongs to the universal ribosomal protein uS2 family. As to quaternary structure, component of the small ribosomal subunit. Mature ribosomes consist of a small (40S) and a large (60S) subunit. The 40S subunit contains about 33 different proteins and 1 molecule of RNA (18S). The 60S subunit contains about 49 different proteins and 3 molecules of RNA (28S, 5.8S and 5S). Interacts with rps-21.

The protein localises to the cytoplasm. Its function is as follows. Required for the assembly and/or stability of the 40S ribosomal subunit. Required for the processing of the 20S rRNA-precursor to mature 18S rRNA in a late step of the maturation of 40S ribosomal subunits. Involved in cold-warm shock-induced translocation of the RNA exosome components from the nucleolus to nucleoplasm. The sequence is that of Small ribosomal subunit protein uS2 from Caenorhabditis elegans.